The primary structure comprises 1219 residues: Polyamine-transporting ATPase 13A3 (1219 aa).

Residues 1–28 (MDKEERKTINKGQEDEMEIHGYNLCRWK) are Cytoplasmic-facing. The stretch at 29-49 (LAMVFVGVICTGGFLLLLLYW) is an intramembrane region. Topologically, residues 50–201 (LPEWRVKATC…IAVKVPSVFK (152 aa)) are cytoplasmic. Residues 202-222 (LLIKEVLNPFYIFQLFSVILW) form a helical membrane-spanning segment. Topologically, residues 223–228 (SVDEYY) are lumenal. A helical membrane pass occupies residues 229 to 249 (YYALAIVIMSVVSIISSLYSI). Residues 250–405 (RKQYVMLHDM…KPTDFKLYRD (156 aa)) are Cytoplasmic-facing. Residues 406–426 (AYLFLLCLVVVAGIGFIYTII) traverse the membrane as a helical segment. Topologically, residues 427 to 444 (NSILNEKEVQEIIIKSLD) are lumenal. Residues 445-465 (IITITVPPALPAAMTAGIVYA) form a helical membrane-spanning segment. Residues 466 to 936 (QRRLKKVGIF…ALMTSFCVFK (471 aa)) lie on the Cytoplasmic side of the membrane. Residue aspartate 494 is the 4-aspartylphosphate intermediate of the active site. Mg(2+)-binding residues include aspartate 494 and threonine 496. ATP contacts are provided by residues 494 to 496 (DKT), phenylalanine 624, arginine 680, and aspartate 746. Phosphoserine is present on serine 813. Residues aspartate 879 and aspartate 883 each coordinate Mg(2+). 879-883 (DGAND) is a binding site for ATP. Residues 937-957 (FMALYSIIQYFSVTLLYSILS) form a helical membrane-spanning segment. Asparagine 958 is a topological domain (lumenal). Residues 959–979 (LGDFQFLFIDLAIILVVVFTM) form a helical membrane-spanning segment. Residues 980-995 (SLNPAWKELVAQRPPS) are Cytoplasmic-facing. Residues 996–1016 (GLISGALLFSVLSQIVISVGF) form a helical membrane-spanning segment. Residues 1017–1066 (QSLGFFWVKQYKVCDPNSDVCNTTRSACWNSSHLYNGTELDSCKIQNYEN) are Lumenal-facing. The helical transmembrane segment at 1067 to 1087 (TTVFFISSFQYLTVAVAFSKG) threads the bilayer. Residues 1088–1098 (KPFRQPCYKNY) lie on the Cytoplasmic side of the membrane. Residues 1099-1119 (FFVISVIILYVFILFIMLHPV) form a helical membrane-spanning segment. Residues 1120–1136 (ASVDQVLEIMCVPYQWR) are Lumenal-facing. The helical transmembrane segment at 1137–1157 (IYMLIIVLINAFVSITVEESV) threads the bilayer. Residues 1158–1219 (DRWGKCCLSW…NGSCQIITIA (62 aa)) lie on the Cytoplasmic side of the membrane.

This sequence belongs to the cation transport ATPase (P-type) (TC 3.A.3) family. Type V subfamily. As to expression, expression is greatest in liver, followed by kidney, colon, stomach, brain and small intestine. Isoform 1 is highly expressed in the kidney while isoform 2 is highly expressed in the brain.

It localises to the recycling endosome membrane. The protein resides in the early endosome membrane. It is found in the late endosome membrane. The enzyme catalyses putrescine(out) + ATP + H2O = putrescine(in) + ADP + phosphate + H(+). Its function is as follows. ATP-driven pump involved in endocytosis-dependent polyamine transport. Uses ATP as an energy source to transfer polyamine precursor putrescine from the endosomal compartment to the cytosol. The polypeptide is Polyamine-transporting ATPase 13A3 (Mus musculus (Mouse)).